A 221-amino-acid chain; its full sequence is GTP-binding nuclear protein Ran-1 (221 aa).

Residues 10–174 (DYPSFKLVIV…LYLARKLAGD (165 aa)) enclose the Small GTPase Ran-type domain. 21 to 28 (DGGTGKTT) is a binding site for GTP. Positions 40 to 48 (KKYEPTIGV) are switch-I. Residues G71, 125-128 (NKVD), and 153-155 (SAK) contribute to the GTP site. Residues 71 to 87 (GQEKFGGLRDGYYIHGQ) form a switch-II region.

It belongs to the small GTPase superfamily. Ran family. As to quaternary structure, found in a nuclear export complex with RanGTP, exportin and pre-miRNA. Interacts with RANBP1A and RANBP1B. Interacts with TRN1. Interacts with ATX1. Interacts with KPNB1. Binds to XPO1. Interacts with MOS14. Binds to NTF2B.

It is found in the nucleus. Its function is as follows. GTP-binding protein involved in nucleocytoplasmic transport. Required for the import of protein into the nucleus and also for RNA export. Involved in chromatin condensation and control of cell cycle. This chain is GTP-binding nuclear protein Ran-1 (RAN1), found in Arabidopsis thaliana (Mouse-ear cress).